Consider the following 339-residue polypeptide: SVP1-like protein 2 (339 aa).

WD repeat units lie at residues 177-217 and 222-261; these read AHAN…LVRE and LDRT…ENKR.

It belongs to the WD repeat PROPPIN family.

The protein resides in the vacuole membrane. Its subcellular location is the cytoplasmic vesicle membrane. Functionally, involved in mitochondrial or peroxisomal functions and amino acid signaling pathways. In Kluyveromyces lactis (strain ATCC 8585 / CBS 2359 / DSM 70799 / NBRC 1267 / NRRL Y-1140 / WM37) (Yeast), this protein is SVP1-like protein 2 (HSV2).